The following is a 430-amino-acid chain: Asparagine--tRNA ligase (430 aa).

The protein belongs to the class-II aminoacyl-tRNA synthetase family. As to quaternary structure, homodimer.

It is found in the cytoplasm. The enzyme catalyses tRNA(Asn) + L-asparagine + ATP = L-asparaginyl-tRNA(Asn) + AMP + diphosphate + H(+). The polypeptide is Asparagine--tRNA ligase (Staphylococcus aureus (strain USA300)).